The chain runs to 313 residues: Meiotically up-regulated gene 100 protein, mitochondrial (313 aa).

The next 2 helical transmembrane spans lie at 147–167 and 178–198; these read VFDYLFFLYGLSGTSILYTAG and SGFITPFFQLLLLVLLFTLTF.

It is found in the mitochondrion inner membrane. Functionally, has a role in meiosis. The chain is Meiotically up-regulated gene 100 protein, mitochondrial (mug100) from Schizosaccharomyces pombe (strain 972 / ATCC 24843) (Fission yeast).